Consider the following 457-residue polypeptide: Siroheme synthase 2 (457 aa).

The precorrin-2 dehydrogenase /sirohydrochlorin ferrochelatase stretch occupies residues 1-204 (MDHLPIFCQL…DDEQAVTRIT (204 aa)). NAD(+) is bound by residues 22 to 23 (DV) and 43 to 44 (LA). S128 is subject to Phosphoserine. The tract at residues 216-457 (GEVVLVGAGP…RDKLNWFSSK (242 aa)) is uroporphyrinogen-III C-methyltransferase. Position 225 (P225) interacts with S-adenosyl-L-methionine. The active-site Proton acceptor is the D248. The Proton donor role is filled by K270. S-adenosyl-L-methionine-binding positions include 301–303 (GGD), I306, 331–332 (TA), M382, and G411.

The protein in the N-terminal section; belongs to the precorrin-2 dehydrogenase / sirohydrochlorin ferrochelatase family. In the C-terminal section; belongs to the precorrin methyltransferase family.

It catalyses the reaction uroporphyrinogen III + 2 S-adenosyl-L-methionine = precorrin-2 + 2 S-adenosyl-L-homocysteine + H(+). The catalysed reaction is precorrin-2 + NAD(+) = sirohydrochlorin + NADH + 2 H(+). It carries out the reaction siroheme + 2 H(+) = sirohydrochlorin + Fe(2+). It functions in the pathway cofactor biosynthesis; adenosylcobalamin biosynthesis; precorrin-2 from uroporphyrinogen III: step 1/1. Its pathway is cofactor biosynthesis; adenosylcobalamin biosynthesis; sirohydrochlorin from precorrin-2: step 1/1. The protein operates within porphyrin-containing compound metabolism; siroheme biosynthesis; precorrin-2 from uroporphyrinogen III: step 1/1. It participates in porphyrin-containing compound metabolism; siroheme biosynthesis; siroheme from sirohydrochlorin: step 1/1. It functions in the pathway porphyrin-containing compound metabolism; siroheme biosynthesis; sirohydrochlorin from precorrin-2: step 1/1. Functionally, multifunctional enzyme that catalyzes the SAM-dependent methylations of uroporphyrinogen III at position C-2 and C-7 to form precorrin-2 via precorrin-1. Then it catalyzes the NAD-dependent ring dehydrogenation of precorrin-2 to yield sirohydrochlorin. Finally, it catalyzes the ferrochelation of sirohydrochlorin to yield siroheme. The polypeptide is Siroheme synthase 2 (Cronobacter sakazakii (strain ATCC BAA-894) (Enterobacter sakazakii)).